The chain runs to 469 residues: GDNF family receptor alpha-1 (469 aa).

Positions 1 to 27 are cleaved as a signal peptide; sequence MFLALLYLALPLADVLLSAEVSGLPGG. 3 repeat units span residues 28–116, 149–237, and 238–341. A disulfide bridge connects residues Cys-39 and Cys-45. N-linked (GlcNAc...) asparagine glycosylation is found at Asn-62 and Asn-163. 10 disulfides stabilise this stretch: Cys-153-Cys-213, Cys-160-Cys-166, Cys-177-Cys-191, Cys-186-Cys-232, Cys-215-Cys-220, Cys-242-Cys-312, Cys-249-Cys-255, Cys-266-Cys-284, Cys-276-Cys-336, and Cys-314-Cys-324. 2 N-linked (GlcNAc...) asparagine glycosylation sites follow: Asn-346 and Asn-405. Residue Ser-430 is the site of GPI-anchor amidated serine attachment. Residues 431–469 constitute a propeptide, removed in mature form; the sequence is HISSENSFALPTSFYPSTPLILMTIALSLFLFLSSSVVL.

Belongs to the GDNFR family. Interacts with GDNF ligand and RET: forms a 2:2:2 ternary complex composed of GDNF ligand, GFRA1 and RET receptor.

The protein localises to the cell membrane. The protein resides in the golgi apparatus. It localises to the trans-Golgi network. Its subcellular location is the endosome. It is found in the multivesicular body. Functionally, coreceptor for GDNF, a neurotrophic factor that enhances survival and morphological differentiation of dopaminergic neurons and increases their high-affinity dopamine uptake. GDNF-binding leads to autophosphorylation and activation of the RET receptor. The polypeptide is GDNF family receptor alpha-1 (GFRA1) (Gallus gallus (Chicken)).